Consider the following 149-residue polypeptide: Ribosome maturation factor RimP (149 aa).

Belongs to the RimP family.

Its subcellular location is the cytoplasm. Required for maturation of 30S ribosomal subunits. This is Ribosome maturation factor RimP from Sulfurimonas denitrificans (strain ATCC 33889 / DSM 1251) (Thiomicrospira denitrificans (strain ATCC 33889 / DSM 1251)).